The following is a 55-amino-acid chain: Hirustasin (55 aa).

5 disulfide bridges follow: Cys6–Cys17, Cys11–Cys22, Cys24–Cys44, Cys29–Cys48, and Cys33–Cys50. In terms of domain architecture, Antistasin-like spans 24–50 (CNEVHCRIRCKYGLKKDENGCEYPCSC).

It belongs to the protease inhibitor I15 (antistasin) family.

It is found in the secreted. Acts as an inhibitor of tissue kallikrein, trypsin, chymotrypsin and neutrophil cathepsin G. The polypeptide is Hirustasin (Hirudo medicinalis (Medicinal leech)).